The primary structure comprises 855 residues: Dynein axonemal assembly factor 5 (855 aa).

At Ala2 the chain carries N-acetylalanine. 10 HEAT repeats span residues 71-109, 202-240, 241-278, 280-318, 354-376, 377-414, 599-638, 696-734, 738-776, and 784-822; these read GPWA…RAAR, HMQS…FGNG, KSVD…CLRD, YSFF…QWQK, FRNL…VGTR, VKSA…DEEA, GEAL…RATD, RDVQ…TSGG, PEKL…CVKG, and QSSV…LFPD.

Belongs to the DNAAF5 family. Interacts with DNAI2; probably involved in outer arm dynein assembly. As to expression, expressed in nasal epithelium and lung epithelium by ciliated cells (at protein level).

The protein localises to the cytoplasm. Its subcellular location is the dynein axonemal particle. In terms of biological role, cytoplasmic protein involved in the delivery of the dynein machinery to the motile cilium. It is required for the assembly of the axonemal dynein inner and outer arms, two structures attached to the peripheral outer doublet A microtubule of the axoneme, that play a crucial role in cilium motility. The protein is Dynein axonemal assembly factor 5 of Homo sapiens (Human).